We begin with the raw amino-acid sequence, 155 residues long: DNA gyrase inhibitor (155 aa).

It belongs to the DNA gyrase inhibitor family. In terms of assembly, interacts with DNA gyrase.

Its subcellular location is the cytoplasm. Inhibits the supercoiling activity of DNA gyrase. Acts by inhibiting DNA gyrase at an early step, prior to (or at the step of) binding of DNA by the gyrase. It protects cells against toxins that target DNA gyrase, by inhibiting activity of these toxins and reducing the formation of lethal double-strand breaks in the cell. This is DNA gyrase inhibitor from Escherichia fergusonii (strain ATCC 35469 / DSM 13698 / CCUG 18766 / IAM 14443 / JCM 21226 / LMG 7866 / NBRC 102419 / NCTC 12128 / CDC 0568-73).